The sequence spans 160 residues: Protransforming growth factor alpha (160 aa).

The N-terminal stretch at M1–L23 is a signal peptide. Residues E24–A39 constitute a propeptide, removed in mature form. Topologically, residues E24–Q98 are extracellular. N25 carries N-linked (GlcNAc...) asparagine glycosylation. Residues H43–E83 form the EGF-like domain. 3 cysteine pairs are disulfide-bonded: C47/C60, C55/C71, and C73/C82. The propeptide at V90–V160 is removed in mature form. A helical transmembrane segment spans residues A99–C124. The Cytoplasmic segment spans residues Q125–V160. Residues C153 and C154 are each lipidated (S-palmitoyl cysteine).

Interacts with the PDZ domains of MAGI3, SDCBP and SNTA1. The interaction with SDCBP, is required for the targeting to the cell surface. In the endoplasmic reticulum, in its immature form (i.e. with a prosegment and lacking full N-glycosylation), interacts with CNIH. In the Golgi apparatus, may form a complex with CNIH and GORASP2. Interacts (via cytoplasmic C-terminal domain) with NKD2.

It localises to the secreted. The protein localises to the extracellular space. It is found in the cell membrane. Its function is as follows. TGF alpha is a mitogenic polypeptide that is able to bind to the EGF receptor/EGFR and to act synergistically with TGF beta to promote anchorage-independent cell proliferation in soft agar. This Sus scrofa (Pig) protein is Protransforming growth factor alpha (TGFA).